Here is an 85-residue protein sequence, read N- to C-terminus: Large ribosomal subunit protein bL27 (85 aa).

The tract at residues 1 to 22 is disordered; the sequence is MAHKKAGGSTRNGRDSESKRLG.

Belongs to the bacterial ribosomal protein bL27 family.

The chain is Large ribosomal subunit protein bL27 from Teredinibacter turnerae (strain ATCC 39867 / T7901).